The primary structure comprises 458 residues: Zinc finger protein 239 (458 aa).

A Glycyl lysine isopeptide (Lys-Gly) (interchain with G-Cter in SUMO2) cross-link involves residue K108. A Phosphoserine modification is found at S191. C2H2-type zinc fingers lie at residues 207–229 (YECS…QRDH), 235–257 (YKCE…QAVH), 263–285 (YKCD…HAVH), 291–313 (YKCD…QRVH), 319–341 (YECE…QRVH), 347–369 (YKCG…RCIH), 375–397 (YQCY…LRVH), 403–425 (YHCG…QRVH), and 431–453 (YECS…QRVH).

The protein belongs to the krueppel C2H2-type zinc-finger protein family.

The protein localises to the nucleus. May be involved in transcriptional regulation. The protein is Zinc finger protein 239 (ZNF239) of Homo sapiens (Human).